We begin with the raw amino-acid sequence, 245 residues long: Polynucleotide 3'-phosphatase (245 aa).

Belongs to the DNA 3' phosphatase family.

Its subcellular location is the nucleus. The catalysed reaction is a 3'end (2'-deoxyribonucleotide 3'-phosphate)-DNA + H2O = a 3'-end 2'-deoxyribonucleotide-DNA + phosphate. Its function is as follows. Dephosphorylate DNA's 3'-phosphate termini. Has a role in the repair of breaks in single-stranded DNA. This is Polynucleotide 3'-phosphatase (TPP1) from Saccharomyces mikatae (Yeast).